A 348-amino-acid polypeptide reads, in one-letter code: Xaa-Pro dipeptidase (348 aa).

The Co(2+) site is built by Asp209, Asp220, His284, Glu313, and Glu327.

This sequence belongs to the peptidase M24B family. Archaeal-type prolidase subfamily. As to quaternary structure, homodimer. Co(2+) is required as a cofactor. It depends on Mn(2+) as a cofactor.

The protein resides in the cytoplasm. It catalyses the reaction Xaa-L-Pro dipeptide + H2O = an L-alpha-amino acid + L-proline. Splits dipeptides with a prolyl in the C-terminal position and a nonpolar amino acid at the N-terminal position. This is Xaa-Pro dipeptidase (pepQ) from Pyrococcus furiosus (strain ATCC 43587 / DSM 3638 / JCM 8422 / Vc1).